The chain runs to 278 residues: Ribonuclease HII (278 aa).

The 189-residue stretch at 71–259 (WPVAGCDEAG…VAAAWDKHAP (189 aa)) folds into the RNase H type-2 domain. The a divalent metal cation site is built by D77, E78, and D168.

The protein belongs to the RNase HII family. Mn(2+) serves as cofactor. It depends on Mg(2+) as a cofactor.

It is found in the cytoplasm. The catalysed reaction is Endonucleolytic cleavage to 5'-phosphomonoester.. In terms of biological role, endonuclease that specifically degrades the RNA of RNA-DNA hybrids. This chain is Ribonuclease HII, found in Rhodopseudomonas palustris (strain BisA53).